A 665-amino-acid polypeptide reads, in one-letter code: Lamin-A (665 aa).

An N-acetylmethionine modification is found at Met1. The interval 1-29 is head; it reads METPGQKRATRSTHTPLSPTRITRLQEKE. Position 18 is a phosphoserine (Ser18). The 357-residue stretch at 27–383 folds into the IF rod domain; that stretch reads EKEDLQGLND…KLLEGEEERL (357 aa). Residues 30–66 are coil 1A; sequence DLQGLNDRLAVYIDKVRSLELENARLRLRITESEDVI. The tract at residues 67-76 is linker 1; it reads SREVTGIKSA. The interval 77 to 214 is coil 1B; it reads YETELADARK…SIYNEEMRET (138 aa). The interval 215–238 is linker 2; the sequence is KRRHETRLVEVDNGRQREFESKLA. The segment at 239–383 is coil 2; sequence DALHELRAQH…KLLEGEEERL (145 aa). Disordered regions lie at residues 381–441, 550–581, and 602–641; these read ERLR…SVEE, DDED…GEYN, and ASQG…LGES. The tail stretch occupies residues 384-664; sequence RLSPSPNTQK…AQVAPQNCSI (281 aa). Ser388 bears the Phosphoserine mark. A compositionally biased stretch (low complexity) spans 399–411; sequence IASHSGAHISSSA. Positions 413-418 match the Nuclear localization signal motif; that stretch reads KRRRLE. An LTD domain is found at 425-542; that stretch reads SSFTQHARTT…EEVAMRKLVR (118 aa). A compositionally biased stretch (polar residues) spans 427-436; that stretch reads FTQHARTTGK. Residues 605–630 show a composition bias toward low complexity; that stretch reads GSGLVTGSSGSSSSSVTLTRTYRSTG. Cys662 is subject to Cysteine methyl ester. The S-farnesyl cysteine moiety is linked to residue Cys662. Residues 663 to 665 constitute a propeptide, removed in mature form; sequence SIM.

This sequence belongs to the intermediate filament family. Homodimer. Lamin dimers then assemble into dimeric head-to-tail polymers. Ultimately, two head-to-tail polymers assemble laterally into a protofilament with a uniformly shaped rod of 3.5 nm in diameter. In terms of processing, phosphorylation plays a key role in lamin organization, subcellular localization and nuclear envelope disintegration. Phosphorylation by CDK1 at Ser-18 at the onset of mitosis drives lamin disassembly and nuclear envelope breakdown.

The protein resides in the nucleus lamina. It localises to the nucleus envelope. The protein localises to the nucleus. It is found in the nucleoplasm. Its subcellular location is the nucleus matrix. In terms of biological role, lamins are intermediate filament proteins that assemble into a filamentous meshwork, and which constitute the major components of the nuclear lamina, a fibrous layer on the nucleoplasmic side of the inner nuclear membrane. Lamins provide a framework for the nuclear envelope, bridging the nuclear envelope and chromatin, thereby playing an important role in nuclear assembly, chromatin organization, nuclear membrane and telomere dynamics. The structural integrity of the lamina is strictly controlled by the cell cycle, as seen by the disintegration and formation of the nuclear envelope in prophase and telophase, respectively. This is Lamin-A (lmna) from Xenopus laevis (African clawed frog).